A 419-amino-acid polypeptide reads, in one-letter code: Peroxisome biogenesis factor 10 (419 aa).

The Peroxisomal matrix portion of the chain corresponds to 1 to 27 (MPPSEEIKLRAVSPRPDFKANYLEFAN). A helical membrane pass occupies residues 28–57 (APAIVRANQKDSYFETVLRDKLQNVIQIFK). Residue Gly-58 is a topological domain, cytoplasmic. Residues 59 to 80 (QRFTHTHPEEIGVAAKALYLSL) form a helical membrane-spanning segment. Over 81–108 (TTLLGTKTLGEEYVDLIYVSRDGKRIPR) the chain is Peroxisomal matrix. The helical transmembrane segment at 109–141 (YLARAGFIFAYAILPYFLTRLFRRLKSSSTPKD) threads the bilayer. Over 142-158 (EVTEEKINKELPISLRI) the chain is Cytoplasmic. A helical membrane pass occupies residues 159 to 185 (EKYLSNMSYSKVLDTIMNLHIAVFYFS). Topologically, residues 186–215 (GQFYNISKRFFSMRYAFGHKINKERTPNGN) are peroxisomal matrix. Residues 216–235 (YELLGGLIVLQLVMKSLGGF) form a helical membrane-spanning segment. The Cytoplasmic segment spans residues 236–419 (KGLIGSFTGN…RTLGYFLVVF (184 aa)). Zn(2+)-binding residues include Cys-298, Cys-301, Cys-313, His-315, Cys-318, Cys-321, Cys-334, and Cys-347. The segment at 298-360 (CMLCLSYMTN…FYIPTLNKIC (63 aa)) adopts an RING-type zinc-finger fold.

Belongs to the pex2/pex10/pex12 family. As to quaternary structure, component of the peroxisomal translocation complex, composed of at least PEX3, PEX2, PEX10 and PEX12. Interacts with PEX19.

Its subcellular location is the peroxisome membrane. It carries out the reaction S-ubiquitinyl-[E2 ubiquitin-conjugating enzyme]-L-cysteine + [acceptor protein]-L-lysine = [E2 ubiquitin-conjugating enzyme]-L-cysteine + N(6)-ubiquitinyl-[acceptor protein]-L-lysine.. The protein operates within protein modification; protein ubiquitination. With respect to regulation, the E3 ubiquitin-protein ligase activity is stimulated by PEX12. Its function is as follows. E3 ubiquitin-protein ligase component of the peroxisomal translocation complex. The two types of peroxisomal matrix targeting signals, PTS1 and PTS2, are first recognized in the cytosol by their receptors PEX5 and PEX7, respectively, which then carry the cargo to the peroxisomal membrane. The peroxisomal targeting signal (PTS) receptor-cargo complexes interact with peroxisomal membrane protein (PMP) components of the docking complex. They have then additional downstream interactions with the translocation complex, leading to the transport of fully folded and oligomerized cargo into the peroxisome matrix. The peroxisomal translocation complex forms the retrotranslocation channel with each subunit contributing transmembrane segments that coassemble into an open channel that specifically allows the passage of PEX5 and PEX20 through the peroxisomal membrane. Specifically catalyzes monoubiquitination of PEX5 and/or PEX20 at 'Cys-6' and 'Cys-8', respectively, a modification that acts as a signal for PEX5 or PEX20 export from peroxisomes to the cytosol, thereby promoting PEX5 and PEX20 recycling. The chain is Peroxisome biogenesis factor 10 from Komagataella pastoris (Yeast).